A 448-amino-acid chain; its full sequence is Methylenetetrahydrofolate--tRNA-(uracil-5-)-methyltransferase TrmFO (448 aa).

13–18 lines the FAD pocket; it reads GAGLAG.

Belongs to the MnmG family. TrmFO subfamily. The cofactor is FAD.

It is found in the cytoplasm. It catalyses the reaction uridine(54) in tRNA + (6R)-5,10-methylene-5,6,7,8-tetrahydrofolate + NADH + H(+) = 5-methyluridine(54) in tRNA + (6S)-5,6,7,8-tetrahydrofolate + NAD(+). The catalysed reaction is uridine(54) in tRNA + (6R)-5,10-methylene-5,6,7,8-tetrahydrofolate + NADPH + H(+) = 5-methyluridine(54) in tRNA + (6S)-5,6,7,8-tetrahydrofolate + NADP(+). Functionally, catalyzes the folate-dependent formation of 5-methyl-uridine at position 54 (M-5-U54) in all tRNAs. This is Methylenetetrahydrofolate--tRNA-(uracil-5-)-methyltransferase TrmFO from Streptococcus pyogenes serotype M2 (strain MGAS10270).